A 343-amino-acid polypeptide reads, in one-letter code: Putative kinase HI_0665 (343 aa).

Catalysis depends on Asp209, which acts as the Proton acceptor.

Belongs to the HipA Ser/Thr kinase family.

In Haemophilus influenzae (strain ATCC 51907 / DSM 11121 / KW20 / Rd), this protein is Putative kinase HI_0665.